A 122-amino-acid polypeptide reads, in one-letter code: Large ribosomal subunit protein uL18 (122 aa).

The protein belongs to the universal ribosomal protein uL18 family. As to quaternary structure, part of the 50S ribosomal subunit; part of the 5S rRNA/L5/L18/L25 subcomplex. Contacts the 5S and 23S rRNAs.

Functionally, this is one of the proteins that bind and probably mediate the attachment of the 5S RNA into the large ribosomal subunit, where it forms part of the central protuberance. This is Large ribosomal subunit protein uL18 from Prochlorococcus marinus (strain MIT 9515).